Here is a 42-residue protein sequence, read N- to C-terminus: Photosystem I reaction center subunit IX (42 aa).

The chain crosses the membrane as a helical span at residues 8–28 (YLSTAPVLFTVWLSFTASFII).

This sequence belongs to the PsaJ family.

The protein resides in the plastid. The protein localises to the chloroplast thylakoid membrane. Functionally, may help in the organization of the PsaE and PsaF subunits. In Rhodomonas salina (Cryptomonas salina), this protein is Photosystem I reaction center subunit IX.